A 264-amino-acid polypeptide reads, in one-letter code: 3-methyl-2-oxobutanoate hydroxymethyltransferase (264 aa).

2 residues coordinate Mg(2+): Asp45 and Asp84. 3-methyl-2-oxobutanoate-binding positions include 45-46 (DS), Asp84, and Lys112. Glu114 is a Mg(2+) binding site. The active-site Proton acceptor is the Glu181.

The protein belongs to the PanB family. In terms of assembly, homodecamer; pentamer of dimers. Mg(2+) serves as cofactor.

It is found in the cytoplasm. It carries out the reaction 3-methyl-2-oxobutanoate + (6R)-5,10-methylene-5,6,7,8-tetrahydrofolate + H2O = 2-dehydropantoate + (6S)-5,6,7,8-tetrahydrofolate. It functions in the pathway cofactor biosynthesis; (R)-pantothenate biosynthesis; (R)-pantoate from 3-methyl-2-oxobutanoate: step 1/2. Its function is as follows. Catalyzes the reversible reaction in which hydroxymethyl group from 5,10-methylenetetrahydrofolate is transferred onto alpha-ketoisovalerate to form ketopantoate. This Shewanella putrefaciens (strain CN-32 / ATCC BAA-453) protein is 3-methyl-2-oxobutanoate hydroxymethyltransferase.